The sequence spans 472 residues: 6-phosphogluconate dehydrogenase, decarboxylating (472 aa).

NADP(+)-binding positions include 10–15 (GMAVMG), 33–35 (NRT), 74–76 (VQA), and Asn-102. Substrate is bound by residues Asn-102 and 128-130 (SGG). The Proton acceptor role is filled by Lys-184. 187 to 188 (HN) contacts substrate. Catalysis depends on Glu-191, which acts as the Proton donor. The substrate site is built by Tyr-192, Lys-262, Arg-289, Arg-447, and His-453.

This sequence belongs to the 6-phosphogluconate dehydrogenase family. In terms of assembly, homodimer.

It carries out the reaction 6-phospho-D-gluconate + NADP(+) = D-ribulose 5-phosphate + CO2 + NADPH. It functions in the pathway carbohydrate degradation; pentose phosphate pathway; D-ribulose 5-phosphate from D-glucose 6-phosphate (oxidative stage): step 3/3. Functionally, catalyzes the oxidative decarboxylation of 6-phosphogluconate to ribulose 5-phosphate and CO(2), with concomitant reduction of NADP to NADPH. This Lactococcus lactis subsp. lactis (strain IL1403) (Streptococcus lactis) protein is 6-phosphogluconate dehydrogenase, decarboxylating (gnd).